We begin with the raw amino-acid sequence, 264 residues long: Thiazole synthase (264 aa).

Lysine 106 functions as the Schiff-base intermediate with DXP in the catalytic mechanism. 1-deoxy-D-xylulose 5-phosphate contacts are provided by residues glycine 167, 193–194 (AG), and 215–216 (NS).

It belongs to the ThiG family. In terms of assembly, homotetramer. Forms heterodimers with either ThiH or ThiS.

The protein localises to the cytoplasm. It carries out the reaction [ThiS sulfur-carrier protein]-C-terminal-Gly-aminoethanethioate + 2-iminoacetate + 1-deoxy-D-xylulose 5-phosphate = [ThiS sulfur-carrier protein]-C-terminal Gly-Gly + 2-[(2R,5Z)-2-carboxy-4-methylthiazol-5(2H)-ylidene]ethyl phosphate + 2 H2O + H(+). It participates in cofactor biosynthesis; thiamine diphosphate biosynthesis. Catalyzes the rearrangement of 1-deoxy-D-xylulose 5-phosphate (DXP) to produce the thiazole phosphate moiety of thiamine. Sulfur is provided by the thiocarboxylate moiety of the carrier protein ThiS. In vitro, sulfur can be provided by H(2)S. This Pseudomonas fluorescens (strain Pf0-1) protein is Thiazole synthase.